The chain runs to 435 residues: Tol-Pal system protein TolB (435 aa).

An N-terminal signal peptide occupies residues 1-20 (MRKIIAGVFIFVFLISNLYA).

Belongs to the TolB family. The Tol-Pal system is composed of five core proteins: the inner membrane proteins TolA, TolQ and TolR, the periplasmic protein TolB and the outer membrane protein Pal. They form a network linking the inner and outer membranes and the peptidoglycan layer.

Its subcellular location is the periplasm. Its function is as follows. Part of the Tol-Pal system, which plays a role in outer membrane invagination during cell division and is important for maintaining outer membrane integrity. The chain is Tol-Pal system protein TolB from Francisella tularensis subsp. mediasiatica (strain FSC147).